The primary structure comprises 365 residues: Tetraacyldisaccharide 4'-kinase (365 aa).

68–75 provides a ligand contact to ATP; it reads VVGGAGKT.

It belongs to the LpxK family.

The enzyme catalyses a lipid A disaccharide + ATP = a lipid IVA + ADP + H(+). Its pathway is glycolipid biosynthesis; lipid IV(A) biosynthesis; lipid IV(A) from (3R)-3-hydroxytetradecanoyl-[acyl-carrier-protein] and UDP-N-acetyl-alpha-D-glucosamine: step 6/6. In terms of biological role, transfers the gamma-phosphate of ATP to the 4'-position of a tetraacyldisaccharide 1-phosphate intermediate (termed DS-1-P) to form tetraacyldisaccharide 1,4'-bis-phosphate (lipid IVA). This chain is Tetraacyldisaccharide 4'-kinase, found in Chlamydia pneumoniae (Chlamydophila pneumoniae).